The primary structure comprises 263 residues: 3-methyl-2-oxobutanoate hydroxymethyltransferase (263 aa).

Mg(2+)-binding residues include aspartate 45 and aspartate 84. 3-methyl-2-oxobutanoate contacts are provided by residues 45-46, aspartate 84, and lysine 112; that span reads DS. Glutamate 114 contributes to the Mg(2+) binding site. Glutamate 180 serves as the catalytic Proton acceptor.

This sequence belongs to the PanB family. Homodecamer; pentamer of dimers. Mg(2+) is required as a cofactor.

The protein resides in the cytoplasm. The catalysed reaction is 3-methyl-2-oxobutanoate + (6R)-5,10-methylene-5,6,7,8-tetrahydrofolate + H2O = 2-dehydropantoate + (6S)-5,6,7,8-tetrahydrofolate. It participates in cofactor biosynthesis; (R)-pantothenate biosynthesis; (R)-pantoate from 3-methyl-2-oxobutanoate: step 1/2. Functionally, catalyzes the reversible reaction in which hydroxymethyl group from 5,10-methylenetetrahydrofolate is transferred onto alpha-ketoisovalerate to form ketopantoate. In Klebsiella pneumoniae (strain 342), this protein is 3-methyl-2-oxobutanoate hydroxymethyltransferase.